The primary structure comprises 429 residues: Proton/sodium-glutamate symport protein (429 aa).

At 1–5 the chain is on the cytoplasmic side; that stretch reads MKRIK. Residues 6-26 form a helical membrane-spanning segment; the sequence is FGLATQIFVGLILGVIVGVIW. Topologically, residues 27–45 are extracellular; sequence YGNPALPTYLQPIGDLFLR. The helical transmembrane segment at 46 to 66 threads the bilayer; it reads LIKMIVIPIVVSSLIIGVAGA. Residues 67–79 lie on the Cytoplasmic side of the membrane; that stretch reads GNGKQVGKLGFRT. A helical membrane pass occupies residues 80-100; that stretch reads ILYFEIITTFAIILGLALANI. Residues 101-150 are Extracellular-facing; that stretch reads FHPGTGVNIHEAQKSDISQYVETEKEQSNKSVAETFLHIVPTNFFQSLVE. A helical transmembrane segment spans residues 151-171; the sequence is GDLLAIICFTVLFALGISAIG. Residues 172–190 lie on the Cytoplasmic side of the membrane; it reads ERGKPVLAFFEGVSHAMFH. Residues 191–211 form a helical membrane-spanning segment; sequence VVNLVMKVAPFGVFALIGVTV. Residues 212–224 lie on the Extracellular side of the membrane; it reads SKFGLGSLISLGK. Residues 225 to 245 form a helical membrane-spanning segment; it reads LVGLVYVALAFFLIVIFGIVA. A topological domain (cytoplasmic) is located at residue Lys246. The helical transmembrane segment at 247-267 threads the bilayer; the sequence is IAGISIFKFLAYMKDEILLAF. Over 268-290 the chain is Extracellular; sequence STSSSETVLPRIMEKMEKIGCPK. The chain crosses the membrane as a helical span at residues 291–311; the sequence is GIVSFVIPIGYTFNLDGSVLY. At 312–321 the chain is on the cytoplasmic side; that stretch reads QSIAALFLAQ. The chain crosses the membrane as a helical span at residues 322–342; it reads VYGIDLTIWHQITLVLVLMVT. At 343 to 353 the chain is on the extracellular side; it reads SKGMAAVPGTS. A helical membrane pass occupies residues 354–374; that stretch reads FVVLLATLGTIGVPAEGLAFI. Topologically, residues 375 to 429 are cytoplasmic; that stretch reads AGVDRIMDMARTVVNLTGNALAAVVMSKWEGMFNPAKAETVMSQSKTEQNATISG.

It belongs to the dicarboxylate/amino acid:cation symporter (DAACS) (TC 2.A.23) family. Homotrimer. Interacts with FloT.

It localises to the cell membrane. The protein localises to the membrane raft. Functionally, this carrier protein is part of the Na(+)-dependent, binding-protein-independent glutamate-aspartate transport system. This Bacillus subtilis (strain 168) protein is Proton/sodium-glutamate symport protein (gltT).